Reading from the N-terminus, the 592-residue chain is Beta-fructofuranosidase, insoluble isoenzyme 2 (592 aa).

The signal sequence occupies residues 1–40 (MLIRCFHIKMALVTCFHSMLFLSAVVFIFSLDVNIRGVEA). Aspartate 75 is a catalytic residue. Residues asparagine 171, asparagine 195, asparagine 310, asparagine 347, and asparagine 568 are each glycosylated (N-linked (GlcNAc...) asparagine).

This sequence belongs to the glycosyl hydrolase 32 family.

The protein resides in the secreted. The protein localises to the cell wall. It catalyses the reaction Hydrolysis of terminal non-reducing beta-D-fructofuranoside residues in beta-D-fructofuranosides.. May play an important role in phloem unloading and in stress response. The chain is Beta-fructofuranosidase, insoluble isoenzyme 2 (INV2) from Daucus carota (Wild carrot).